We begin with the raw amino-acid sequence, 473 residues long: Bifunctional protein GlmU (473 aa).

The segment at 1–240 is pyrophosphorylase; that stretch reads MAIHPLDVVI…AAQVAGVNSP (240 aa). Residues K25, Q83, 88–89, 110–112, G147, E165, and N238 each bind UDP-N-acetyl-alpha-D-glucosamine; these read GT and SGD. A Mg(2+)-binding site is contributed by D112. N238 contributes to the Mg(2+) binding site. The linker stretch occupies residues 241–261; that stretch reads VQLAELERVYQQRLATTLMEQ. The tract at residues 262–473 is N-acetyltransferase; it reads GVRLADPARL…WARPVKKPGV (212 aa). The UDP-N-acetyl-alpha-D-glucosamine site is built by R348 and K366. The active-site Proton acceptor is the H378. The UDP-N-acetyl-alpha-D-glucosamine site is built by Y381 and N392. Acetyl-CoA is bound by residues A395, 401-402, S420, G438, and R455; that span reads NY.

In the N-terminal section; belongs to the N-acetylglucosamine-1-phosphate uridyltransferase family. It in the C-terminal section; belongs to the transferase hexapeptide repeat family. Homotrimer. Mg(2+) serves as cofactor.

The protein localises to the cytoplasm. It carries out the reaction alpha-D-glucosamine 1-phosphate + acetyl-CoA = N-acetyl-alpha-D-glucosamine 1-phosphate + CoA + H(+). The catalysed reaction is N-acetyl-alpha-D-glucosamine 1-phosphate + UTP + H(+) = UDP-N-acetyl-alpha-D-glucosamine + diphosphate. Its pathway is nucleotide-sugar biosynthesis; UDP-N-acetyl-alpha-D-glucosamine biosynthesis; N-acetyl-alpha-D-glucosamine 1-phosphate from alpha-D-glucosamine 6-phosphate (route II): step 2/2. The protein operates within nucleotide-sugar biosynthesis; UDP-N-acetyl-alpha-D-glucosamine biosynthesis; UDP-N-acetyl-alpha-D-glucosamine from N-acetyl-alpha-D-glucosamine 1-phosphate: step 1/1. It participates in bacterial outer membrane biogenesis; LPS lipid A biosynthesis. Catalyzes the last two sequential reactions in the de novo biosynthetic pathway for UDP-N-acetylglucosamine (UDP-GlcNAc). The C-terminal domain catalyzes the transfer of acetyl group from acetyl coenzyme A to glucosamine-1-phosphate (GlcN-1-P) to produce N-acetylglucosamine-1-phosphate (GlcNAc-1-P), which is converted into UDP-GlcNAc by the transfer of uridine 5-monophosphate (from uridine 5-triphosphate), a reaction catalyzed by the N-terminal domain. This Polaromonas naphthalenivorans (strain CJ2) protein is Bifunctional protein GlmU.